Reading from the N-terminus, the 460-residue chain is Transcription factor TGA10 (460 aa).

The segment covering 1 to 11 (MQGHHQNHHQH) has biased composition (basic residues). Disordered regions lie at residues 1–29 (MQGHHQNHHQHLSSSSATSSHGNFMNKDG) and 43–163 (LDGQ…PKTL). Positions 12–21 (LSSSSATSSH) are enriched in low complexity. Polar residues-rich tracts occupy residues 65–81 (TQNLAMRPPTSTLNIFP) and 121–136 (DLTNHSQFHQPPQGSK). Basic and acidic residues predominate over residues 138–162 (IKKEGNRKGLASSDHDIPKSSDPKT). The region spanning 159 to 203 (DPKTLRRLAQNREAARKSRLRKKAYVQQLESCRIKLTQLEQEIQR) is the bZIP domain. Residues 161–181 (KTLRRLAQNREAARKSRLRKK) are basic motif. The short motif at 163–170 (LRRLAQNR) is the Nuclear localization signal element. The leucine-zipper stretch occupies residues 187 to 201 (LESCRIKLTQLEQEI). One can recognise a DOG1 domain in the interval 236 to 455 (AAVFDMEYAR…QALSSLWLAR (220 aa)).

Belongs to the bZIP family. Homodimer. Binds DNA as a dimer. Interacts with floral glutaredoxins GRXC7/ROXY1 and GRXC8/ROXY2 in the nucleus. Interacts with TGA1, TGA2, TGA3, TGA4, TGA5, TGA6, TGA7, TGA9 and PAN. As to expression, expressed at low levels in inflorescence apex and flowers.

The protein localises to the nucleus. Functionally, together with TGA9, basic leucine-zipper transcription factor required for anther development, probably via the activation of SPL expression in anthers and via the regulation of genes with functions in early and middle tapetal development. Required for signaling responses to pathogen-associated molecular patterns (PAMPs) such as flg22 that involves chloroplastic reactive oxygen species (ROS) production and subsequent expression of H(2)O(2)-responsive genes. This is Transcription factor TGA10 from Arabidopsis thaliana (Mouse-ear cress).